The sequence spans 82 residues: Small ribosomal subunit protein eS21 (82 aa).

It belongs to the eukaryotic ribosomal protein eS21 family.

The sequence is that of Small ribosomal subunit protein eS21 (RPS21) from Cyanophora paradoxa.